The primary structure comprises 307 residues: D-alanine--D-alanine ligase (307 aa).

The ATP-grasp domain maps to 104–301 (RTAFLAAGLP…FVSLCRWMVE (198 aa)). An ATP-binding site is contributed by 130–183 (PLPRPFVIKPANEGSAVGVHILHEGDNRRTEIARSWSFGGQALVEEYIPGRELT). Asp251, Glu268, and Asn270 together coordinate Mg(2+).

It belongs to the D-alanine--D-alanine ligase family. The cofactor is Mg(2+). Requires Mn(2+) as cofactor.

It is found in the cytoplasm. It carries out the reaction 2 D-alanine + ATP = D-alanyl-D-alanine + ADP + phosphate + H(+). It functions in the pathway cell wall biogenesis; peptidoglycan biosynthesis. Functionally, cell wall formation. The polypeptide is D-alanine--D-alanine ligase (Granulibacter bethesdensis (strain ATCC BAA-1260 / CGDNIH1)).